Consider the following 516-residue polypeptide: Maturase K (516 aa).

It belongs to the intron maturase 2 family. MatK subfamily.

The protein localises to the plastid. It is found in the chloroplast. Usually encoded in the trnK tRNA gene intron. Probably assists in splicing its own and other chloroplast group II introns. The chain is Maturase K from Disporum sessile (Japanese fairy bells).